The following is a 562-amino-acid chain: MSFILPSESIDGTHPCNGLHMNGQDSLVQPLLTDFYQITMCYAYWKTGTHNEPAVFDVFFRKNPFQGEFTVFAGLEDCLRFVENFKFSQSDIDYVKKILPENAEPEFYEYLETLNGSHLTIEAVAEGSVVFPKVPLLTINGPLAMCQLIETSILNLVNYASLVATNAARFRQASGWKIQLLEFGLRRAQGPNGGLTASKYCYIGGFDATSNVLAGKLYGIPVKGTQAHSFICSFSSPAELKVRLLNHKITNEKADLFQISMEKRAWLLDQFSWKAALSEVSDGELSAFVAYAIAFPDTFLALIDTYDVIRSGVVNFVAVSLALHDLGYRSMGCRIDSGDLSYLSKELRECFVKVSTLKGEYKFFEKMSIVASNDINEETIMSLNDQQHEINAFGVGTHLVTCQKQPALGCVYKLVAQSAQPKIKLSQDVTKITIPGKKKCYRIFGKNGYAILDLMMLEDEPEPQPNQQILCRHPFEESKRALVNANKIIKLHNVYWKDGEMITPLPTLNEIKEHVNESIRSTLRQDHRRYLNPTPYKVSVSERLYQFLHTLWLQNAPIGQLE.

Positions 36, 183, and 225 each coordinate nicotinate. The residue at position 228 (histidine 228) is a Phosphohistidine. Residue threonine 397 coordinates 5-phospho-alpha-D-ribose 1-diphosphate.

This sequence belongs to the NAPRTase family. It depends on Mg(2+) as a cofactor. The cofactor is Mn(2+). Post-translationally, transiently phosphorylated on a His residue during the reaction cycle. Phosphorylation strongly increases the affinity for substrates and increases the rate of nicotinate D-ribonucleotide production. Dephosphorylation regenerates the low-affinity form of the enzyme, leading to product release.

The catalysed reaction is nicotinate + 5-phospho-alpha-D-ribose 1-diphosphate + ATP + H2O = nicotinate beta-D-ribonucleotide + ADP + phosphate + diphosphate. It functions in the pathway cofactor biosynthesis; NAD(+) biosynthesis; nicotinate D-ribonucleotide from nicotinate: step 1/1. In terms of biological role, catalyzes the first step in the biosynthesis of NAD from nicotinic acid, the ATP-dependent synthesis of beta-nicotinate D-ribonucleotide from nicotinate and 5-phospho-D-ribose 1-phosphate. Helps prevent cellular oxidative stress via its role in NAD biosynthesis. This Caenorhabditis elegans protein is Nicotinate phosphoribosyltransferase.